The sequence spans 246 residues: uncharacterized protein (246 aa).

2 stretches are compositionally biased toward basic residues: residues 1–10 and 79–97; these read MVWRFQKHIG and TRRRGAGQRHCNQKPKAGR. A disordered region spans residues 1–184; it reads MVWRFQKHIG…LPPAHVPPTL (184 aa). Pro residues predominate over residues 158–180; that stretch reads PPFPPPPPPGDPTPPSPLPPAHV.

This is an uncharacterized protein from Homo sapiens (Human).